The following is a 289-amino-acid chain: HTH-type transcriptional regulator SoxR (289 aa).

Positions 1–58 (MEIKDLQIFQKVVEYGSVSKAAKSLNYVQSYVTVRIQKLEEELQTELFHRSSRGMVLN) constitute an HTH lysR-type domain. Positions 18 to 37 (VSKAAKSLNYVQSYVTVRIQ) form a DNA-binding region, H-T-H motif.

Belongs to the LysR transcriptional regulatory family.

Functionally, transcriptional repressor of soxA gene expression. This is HTH-type transcriptional regulator SoxR (soxR) from Arthrobacter sp. (strain TE1826).